Consider the following 330-residue polypeptide: Quinone oxidoreductase (330 aa).

At alanine 2 the chain carries N-acetylalanine. Lysine 23 carries the N6-acetyllysine modification. NADP(+) is bound by residues tyrosine 53, 158–161 (SGGV), glycine 181, histidine 200, asparagine 229, 246–249 (VGSK), and 269–271 (VTL). At serine 248 the chain carries Phosphoserine.

The protein belongs to the zinc-containing alcohol dehydrogenase family. Quinone oxidoreductase subfamily. Homotetramer.

The protein resides in the cytoplasm. The catalysed reaction is 2 a quinone + NADPH + H(+) = 2 a 1,4-benzosemiquinone + NADP(+). Its function is as follows. Does not have alcohol dehydrogenase activity. Binds NADP and acts through a one-electron transfer process. Orthoquinones, such as 1,2-naphthoquinone or 9,10-phenanthrenequinone, are the best substrates (in vitro). May act in the detoxification of xenobiotics. Interacts with (AU)-rich elements (ARE) in the 3'-UTR of target mRNA species and enhances their stability. NADPH binding interferes with mRNA binding. The polypeptide is Quinone oxidoreductase (CRYZ) (Lama guanicoe (Guanaco)).